Consider the following 274-residue polypeptide: UPF0758 protein RHECIAT_CH0001935 (274 aa).

Residues 1 to 57 are disordered; sequence MAKRPAATSSNDELPFATEEPVADERSFFGGRPQNPTAPNARAALPASLSGPEHYHG. The MPN domain occupies 152 to 274; sequence VLSSWSSVIQ…HVSLKGLKLI (123 aa). Zn(2+) is bound by residues H223, H225, and D236. A JAMM motif motif is present at residues 223–236; it reads HNHPSGDPTPSRAD.

It belongs to the UPF0758 family.

This is UPF0758 protein RHECIAT_CH0001935 from Rhizobium etli (strain CIAT 652).